Here is a 74-residue protein sequence, read N- to C-terminus: Beta-defensin 39 (74 aa).

Positions 1–23 (MKISYFLLLILSLGSSQINPVSG) are cleaved as a signal peptide. 3 disulfide bridges follow: Cys29-Cys58, Cys36-Cys51, and Cys41-Cys59.

The protein belongs to the beta-defensin family. In terms of tissue distribution, only expressed in epididymis (caput, corpus and cauda).

The protein localises to the secreted. Its function is as follows. Has antibacterial activity. This chain is Beta-defensin 39 (Defb39), found in Mus musculus (Mouse).